Reading from the N-terminus, the 220-residue chain is Ras-related protein Rab-3A (220 aa).

GTP contacts are provided by Ser-31, Ser-32, Val-33, Gly-34, Lys-35, Thr-36, Ser-37, Thr-48, Pro-49, Ser-53, and Thr-54. Thr-36 is a Mg(2+) binding site. A Switch 1 motif is present at residues 49–58; it reads PAFVSTVGID. 2 residues coordinate Mg(2+): Thr-54 and Asp-77. Gly-80 is a binding site for GTP. The Switch 2 signature appears at 80–96; the sequence is GQERYRTITTAYYRGAM. Thr-86 carries the phosphothreonine modification. GTP is bound by residues Asn-135, Lys-136, Asp-138, Ala-166, and Lys-167. Phosphoserine is present on residues Ser-188 and Ser-190. Residues 194-220 form a disordered region; it reads ADPAVTGAKQGPQLTDQQAPPHQDCAC. S-geranylgeranyl cysteine attachment occurs at residues Cys-218 and Cys-220. Residue Cys-220 is modified to Cysteine methyl ester.

This sequence belongs to the small GTPase superfamily. Rab family. In terms of assembly, interacts with RIMS1 and RIMS2. Interacts with Rabphilin-3A/RPH3A and Rab effector Noc2/RPH3AL. Interacts with SYTL4. Interacts with RAB3IP. Interacts with SGSM1 and SGSM3. Interacts with SYT1. Interacts with MYH9; this interaction is essential for lysosome exocytosis and plasma membrane repair. Interacts with STXBP1; this interaction promotes RAB3A dissociation from the vesicle membrane. Interacts with SNCA. Interacts with GDI1, GDI2, CHM and CHML; phosphorylation at Thr-86 disrupts these interactions. Interacts with MADD (via uDENN domain); the GTP-bound form is preferred for interaction. Requires Mg(2+) as cofactor. Post-translationally, phosphorylation of Thr-86 in the switch II region by LRRK2 prevents the association of RAB regulatory proteins, including CHM, CHML and RAB GDP dissociation inhibitors GDI1 and GDI2.

It is found in the cytoplasm. It localises to the cytosol. Its subcellular location is the lysosome. The protein localises to the cytoplasmic vesicle. The protein resides in the secretory vesicle. It is found in the cell projection. It localises to the axon. Its subcellular location is the cell membrane. The protein localises to the presynapse. The protein resides in the postsynapse. It carries out the reaction GTP + H2O = GDP + phosphate + H(+). With respect to regulation, regulated by guanine nucleotide exchange factors (GEFs) including RAB3IL1 and MADD which promote the exchange of bound GDP for free GTP. Regulated by GTPase activating proteins (GAPs) including RAB3GAP1 and TBC1D10B which increase the GTP hydrolysis activity. Inhibited by GDP dissociation inhibitors (GDIs) which prevent Rab-GDP dissociation. The small GTPases Rab are key regulators of intracellular membrane trafficking, from the formation of transport vesicles to their fusion with membranes. Rabs cycle between an inactive GDP-bound form and an active GTP-bound form that is able to recruit to membranes different sets of downstream effectors directly responsible for vesicle formation, movement, tethering and fusion. RAB3A plays a central role in regulated exocytosis and secretion. Controls the recruitment, tethering and docking of secretory vesicles to the plasma membrane. Upon stimulation, switches to its active GTP-bound form, cycles to vesicles and recruits effectors such as RIMS1, RIMS2, Rabphilin-3A/RPH3A, RPH3AL or SYTL4 to help the docking of vesicules onto the plasma membrane. Upon GTP hydrolysis by GTPase-activating protein, dissociates from the vesicle membrane allowing the exocytosis to proceed. Stimulates insulin secretion through interaction with RIMS2 or RPH3AL effectors in pancreatic beta cells. Regulates calcium-dependent lysosome exocytosis and plasma membrane repair (PMR) via the interaction with 2 effectors, SYTL4 and myosin-9/MYH9. Acts as a positive regulator of acrosome content secretion in sperm cells by interacting with RIMS1. Also plays a role in the regulation of dopamine release by interacting with synaptotagmin I/SYT. The protein is Ras-related protein Rab-3A (RAB3A) of Sus scrofa (Pig).